The following is a 233-amino-acid chain: Gamma-glutamyl-hercynylcysteine sulfoxide hydrolase (233 aa).

Catalysis depends on Cys-2, which acts as the Nucleophile. In terms of domain architecture, Glutamine amidotransferase type-2 spans 2-233; the sequence is CRHLGWLGAQ…TALDRAKGPR (232 aa).

The enzyme catalyses gamma-L-glutamyl-hercynylcysteine S-oxide + H2O = S-(hercyn-2-yl)-L-cysteine S-oxide + L-glutamate. It functions in the pathway amino-acid biosynthesis; ergothioneine biosynthesis. Catalyzes the hydrolysis of the gamma-glutamyl amide bond of hercynyl-gamma-L-glutamyl-L-cysteine sulfoxide to produce hercynylcysteine sulfoxide, a step in the biosynthesis pathway of ergothioneine. Ergothioneine is an antioxidant that protects mycobacteria from oxidative stress. In Mycobacterium tuberculosis (strain ATCC 25618 / H37Rv), this protein is Gamma-glutamyl-hercynylcysteine sulfoxide hydrolase (egtC).